The sequence spans 863 residues: Leucine--tRNA ligase (863 aa).

The 'HIGH' region motif lies at 42-52 (PYPSGKIHMGH). The 'KMSKS' region signature appears at 618-622 (KMSKS). An ATP-binding site is contributed by lysine 621.

The protein belongs to the class-I aminoacyl-tRNA synthetase family.

Its subcellular location is the cytoplasm. The enzyme catalyses tRNA(Leu) + L-leucine + ATP = L-leucyl-tRNA(Leu) + AMP + diphosphate. The protein is Leucine--tRNA ligase of Desulfatibacillum aliphaticivorans.